Consider the following 427-residue polypeptide: V-type proton ATPase subunit C 2 (427 aa).

Residues 292-319 are disordered; sequence HKVKVTPLGNPDRPAAGQTDRERESEGE.

This sequence belongs to the V-ATPase C subunit family. In terms of assembly, V-ATPase is a heteromultimeric enzyme made up of two complexes: the ATP-hydrolytic V1 complex and the proton translocation V0 complex. The V1 complex consists of three catalytic AB heterodimers that form a heterohexamer, three peripheral stalks each consisting of EG heterodimers, one central rotor including subunits D and F, and the regulatory subunits C and H. The proton translocation complex V0 consists of the proton transport subunit a, a ring of proteolipid subunits c9c'', rotary subunit d, subunits e and f, and the accessory subunits ATP6AP1/Ac45 and ATP6AP2/PRR. As to expression, kidney and placenta.

Its function is as follows. Subunit of the V1 complex of vacuolar(H+)-ATPase (V-ATPase), a multisubunit enzyme composed of a peripheral complex (V1) that hydrolyzes ATP and a membrane integral complex (V0) that translocates protons. V-ATPase is responsible for acidifying and maintaining the pH of intracellular compartments and in some cell types, is targeted to the plasma membrane, where it is responsible for acidifying the extracellular environment. Subunit C is necessary for the assembly of the catalytic sector of the enzyme and is likely to have a specific function in its catalytic activity. This is V-type proton ATPase subunit C 2 (ATP6V1C2) from Homo sapiens (Human).